We begin with the raw amino-acid sequence, 263 residues long: Aquaporin-8 (263 aa).

Residues 1-38 (MSGEQTPMCSMDLREIKGKETNMADSYHGMSWYEQYIQ) lie on the Cytoplasmic side of the membrane. The chain crosses the membrane as a helical span at residues 39-59 (PCVVELLGSALFIFIGCLSVI). Cysteine 55 carries the cysteine persulfide modification. Cysteine 55 carries the cysteine sulfenic acid (-SOH) modification. Residues 60–86 (ENSPNTGLLQPALAHGLALGLIIATLG) lie on the Extracellular side of the membrane. Residues 87–107 (NISGGHFNPAVSLAVTLVGGL) form a helical membrane-spanning segment. The NPA 1 motif lies at 94-96 (NPA). Over 108–109 (KT) the chain is Cytoplasmic. Residues 110–130 (MLLIPYWVSQLFGGMIGAALA) traverse the membrane as a helical segment. Residues 131-158 (KVVSPEERFWNASGAAFAIVQEQEQVAE) are Extracellular-facing. N-linked (GlcNAc...) asparagine glycosylation occurs at asparagine 141. Residues 159 to 179 (ALGVEIVMTMLLVLAVCMGAV) form a helical membrane-spanning segment. Topologically, residues 180-185 (NEKTMG) are cytoplasmic. Residues 186–206 (PLAPFSIGFSVIVDILAGGGI) form a helical membrane-spanning segment. Topologically, residues 207 to 230 (SGACMNPARAFGPAVMAGYWDFHW) are extracellular. The short motif at 212-214 (NPA) is the NPA 2 element. Residues 231-251 (IYWLGPLLAGLFVGLLIRLFI) form a helical membrane-spanning segment. The Cytoplasmic portion of the chain corresponds to 252-263 (GDEKTRLILKSR).

It belongs to the MIP/aquaporin (TC 1.A.8) family. N-glycosylated. Post-translationally, sulfenylation at Cys-55(C55-SOH) when hydrogen peroxide flows through the AQP8 channel, making it susceptible to hydrogen sulfide produced by CBS. In terms of processing, persulfidation at Cys-55 is required to gate AQP8 channel; under stress condition, hydrogen peroxide accumulates in the cell leading to CBS activation that produces hydrogen sulfide inducing persulfidation of oxidized Cys-55 (C55-SOH). Highly expressed in sperm, pancreas and liver. Expressed in hepatocytes, acinal cells of pancreas and salivary gland, and absorptive colonic epithelial cells. Expressed in the myoepithelium of submandibular and parotid glands. Expressed in pancreatic beta-cells. Expressed in testis but not in epididymis. Expressed in small intestine.

It is found in the cell membrane. The protein resides in the mitochondrion inner membrane. It localises to the apical cell membrane. The protein localises to the basolateral cell membrane. Its subcellular location is the smooth endoplasmic reticulum membrane. It catalyses the reaction H2O(in) = H2O(out). The catalysed reaction is NH4(+)(in) = NH4(+)(out). It carries out the reaction H2O2(out) = H2O2(in). The enzyme catalyses formamide(out) = formamide(in). It catalyses the reaction methylamine(out) = methylamine(in). Reversibly gated by a two-step sulfenylation-persulfidation process in cells undergoing diverse stresses. Functionally, channel that allows the facilitated permeation of water and uncharged molecules, such as hydrogen peroxide and the neutral form of ammonia (NH3), through cellular membranes such as plasma membrane, inner mitochondrial membrane and endoplasmic reticulum membrane of several tissues. The transport of ammonia neutral form induces a parallel transport of proton, at alkaline pH when the concentration of ammonia is high. However, it is unclear whether the transport of proton takes place via the aquaporin or via an endogenous pathway. Also, may transport ammonia analogs such as formamide and methylamine, a transport favourited at basic pH due to the increase of unprotonated (neutral) form, which is expected to favor diffusion. Does not transport urea or glycerol. The water transport mechanism is mercury- and copper-sensitive and passive in response to osmotic driving forces. At the canicular plasma membrane, mediates the osmotic transport of water toward the bile canaliculus and facilitates the cAMP-induced bile canalicular water secretion, a process involved in bile formation. In addition, mediates the hydrogen peroxide release from hepatocyte mitochondria that modulates the SREBF2-mediated cholesterol synthesis and facilitates the mitochondrial ammonia uptake which is metabolized into urea, mainly under glucagon stimulation. In B cells, transports the CYBB-generated hydrogen peroxide from the external leaflet of the plasma membrane to the cytosol to promote B cell activation and differentiation for signal amplification. In the small intestine and colon system, mediates water transport through mitochondria and apical membrane of epithelial cells. May play an important role in the adaptive response of proximal tubule cells to acidosis possibly facilitating mitochondrial ammonia transport. This is Aquaporin-8 from Rattus norvegicus (Rat).